The chain runs to 84 residues: MKVVLLECLVWMMAMMELVSCECWSQADCSDGHCCAGSSFSKNCQPYGGDGEQCEPRNKYEVYSTGCPCEENLMCSVINRCQSA.

Positions 1 to 21 are cleaved as a signal peptide; the sequence is MKVVLLECLVWMMAMMELVSC. Intrachain disulfides connect Cys23-Cys35, Cys29-Cys44, Cys34-Cys67, Cys54-Cys75, and Cys69-Cys81.

This sequence belongs to the AVIT (prokineticin) family. In terms of tissue distribution, expressed by the venom gland.

The protein localises to the secreted. This Cyriopagopus hainanus (Chinese bird spider) protein is U8-theraphotoxin-Hhn1a.